The primary structure comprises 1024 residues: Probable serine/threonine-protein kinase DDB_G0271682 (1024 aa).

The tract at residues 187 to 261 (NIDNNNNNNN…RDNENNHNHQ (75 aa)) is disordered. The segment covering 190–244 (NNNNNNNNNNNNNNNNNNNNNNNNNNNNNNNNNNNNNNNNNNNNNNNNNNNNNNN) has biased composition (low complexity). Residues 250–261 (RSRDNENNHNHQ) show a composition bias toward basic and acidic residues. Protein kinase domains follow at residues 360–609 (LLFI…LKLM) and 645–1018 (ILVT…ELLI). Residues 366 to 374 (IGSGACGEV) and K387 each bind ATP. D484 serves as the catalytic Proton acceptor. Residues 651 to 659 (VGGNVSGNV) and K719 each bind ATP. Low complexity-rich tracts occupy residues 823-851 (NNNS…NNNN) and 862-874 (ENTN…TTTT). The segment at 823–874 (NNNSNQNNNNNNNNNNNNNNNNNNNNNNNKKNDGGDDNGENTNTTTTTTTTT) is disordered.

It belongs to the protein kinase superfamily. TKL Ser/Thr protein kinase family.

It catalyses the reaction L-seryl-[protein] + ATP = O-phospho-L-seryl-[protein] + ADP + H(+). It carries out the reaction L-threonyl-[protein] + ATP = O-phospho-L-threonyl-[protein] + ADP + H(+). The polypeptide is Probable serine/threonine-protein kinase DDB_G0271682 (Dictyostelium discoideum (Social amoeba)).